The following is a 79-amino-acid chain: MKFLNVVAIALLVVACLAVYSNAAPHEGVKEVAAAKPMGITCDLLSLWKVGHAACAAHCLVLGDVGGYCTKEGLCVCKE.

The first 23 residues, 1-23, serve as a signal peptide directing secretion; sequence MKFLNVVAIALLVVACLAVYSNA. Intrachain disulfides connect Cys-42-Cys-69, Cys-55-Cys-75, and Cys-59-Cys-77.

It belongs to the invertebrate defensin family. Type 1 subfamily.

It localises to the secreted. The chain is Defensin-1 (SMD1) from Stomoxys calcitrans (Stable fly).